A 347-amino-acid polypeptide reads, in one-letter code: Dihydroorotase (347 aa).

Histidine 14 and histidine 16 together coordinate Zn(2+). Residues 16–18 (HLR) and asparagine 42 each bind substrate. Residues lysine 100, histidine 137, and histidine 175 each contribute to the Zn(2+) site. Residue lysine 100 is modified to N6-carboxylysine. Residue histidine 137 coordinates substrate. Leucine 220 is a binding site for substrate. Aspartate 248 lines the Zn(2+) pocket. The active site involves aspartate 248. 2 residues coordinate substrate: histidine 252 and alanine 264.

Belongs to the metallo-dependent hydrolases superfamily. DHOase family. Class II DHOase subfamily. As to quaternary structure, homodimer. The cofactor is Zn(2+).

The enzyme catalyses (S)-dihydroorotate + H2O = N-carbamoyl-L-aspartate + H(+). It participates in pyrimidine metabolism; UMP biosynthesis via de novo pathway; (S)-dihydroorotate from bicarbonate: step 3/3. In terms of biological role, catalyzes the reversible cyclization of carbamoyl aspartate to dihydroorotate. The chain is Dihydroorotase from Pseudomonas syringae pv. tomato (strain ATCC BAA-871 / DC3000).